The following is a 614-amino-acid chain: MAVENAINFREICSLLDISESYKCTINAFLDNVEKCTDKHYNDALNLLDTFFSNEVKSNSLVNDLIFCIINSNFDFLKVFKSNKLRLENLQIVYESAFNENKPFLKEFSAKDKINKEVKKNLYSTPAVTRFAPEPSGCLHIGHLKALLVNYNLAEKSNGTLLLRFDDTNPVKNYEKYEKEILRDLDTLGITGLKISHSSDYFELLVDEAVSLINKNLAYVDNTDQETMRIERFEGIESKMRNINNSESLKIFKELLQGRAPGYCLRAKIDMSNPNKSMRDPVIYRASDKMHGRCKLYKAFPTYDFVCPIVDSIEGVTVVCRANEYKDRNEQYKWFLENLELENKPEFNDFSKLNLEDTVLSKRKIDKLISDSLVTGWDDPRLATIQGIKRLGMHMTALKDYINLQGASNKTNVISWDKIWAMNKKVIDPLSPRFMAVEKINCVRVFITNFEGLKYTKNIPLNKKNTSLGSKDVLFSDTLLFSQEDGFVLKENEEFTLMNWGNAIVEKKVVENSIVTELYIKLHLEGDYKSTTNKISWVSESGAVTATGIEYGKLLVNEEFNINSKIDKQYYVESSITNLSTDMKHVQFERIGFFYCDSPCVFHLVPFTKQKRTY.

130 to 132 (RFA) serves as a coordination point for L-glutamate. Positions 135-144 (PSGCLHIGHL) match the 'HIGH' region motif. Position 140 (His-140) interacts with ATP. Residues Asp-166, 303 to 307 (YDFVC), and Arg-321 each bind L-glutamate. Residues Glu-324 and 359–363 (VLSKR) contribute to the ATP site. The short motif at 359-363 (VLSKR) is the 'KMSKS' region element.

Belongs to the class-I aminoacyl-tRNA synthetase family. Glutamate--tRNA ligase type 2 subfamily.

It is found in the cytoplasm. The enzyme catalyses tRNA(Glu) + L-glutamate + ATP = L-glutamyl-tRNA(Glu) + AMP + diphosphate. This Vairimorpha ceranae (strain BRL01) (Microsporidian parasite) protein is Probable glutamate--tRNA ligase, cytoplasmic.